Reading from the N-terminus, the 695-residue chain is MKRGKDEEKILEPMFPRLHVNDADKGGPRAPPRNKMALYEQLSIPSQRFGDHGTMNSRSNNTSTLVHPGPSSQPCGVERNLSVQHLDSSAANQATEKFVSQMSFMENVRSSAQHDQRKMVREEEDFAVPVYINSRRSQSHGRTKSGIEKEKHTPMVAPSSHHSIRFQEVNQTGSKQNVCLATCSKPEVRDQVKANARSGGFVISLDVSVTEEIDLEKSASSHDRVNDYNASLRQESRNRLYRDGGKTRLKDTDNGAESHLATENHSQEGHGSPEDIDNDREYSKSRACASLQQINEEASDDVSDDSMVDSISSIDVSPDDVVGILGQKRFWRARKAIANQQRVFAVQLFELHRLIKVQKLIAASPDLLLDEISFLGKVSAKSYPVKKLLPSEFLVKPPLPHVVVKQRGDSEKTDQHKMESSAENVVGRLSNQGHHQQSNYMPFANNPPASPAPNGYCFPPQPPPSGNHQQWLIPVMSPSEGLIYKPHPGMAHTGHYGGYYGHYMPTPMVMPQYHPGMGFPPPGNGYFPPYGMMPTIMNPYCSSQQQQQQQPNEQMNQFGHPGNLQNTQQQQQRSDNEPAPQQQQQPTKSYPRARKSRQGSTGSSPSGPQGISGSKSFRPFAAVDEDSNINNAPEQTMTTTTTTTRTTVTQTTRDGGGVTRVIKVVPHNAKLASENAARIFQSIQEERKRYDSSKP.

The segment covering 1–11 has biased composition (basic and acidic residues); it reads MKRGKDEEKIL. Disordered stretches follow at residues 1–33, 48–75, 136–159, 216–283, and 541–653; these read MKRGKDEEKILEPMFPRLHVNDADKGGPRAPPR, RFGDHGTMNSRSNNTSTLVHPGPSSQPC, RSQSHGRTKSGIEKEKHTPMVAPS, EKSA…REYS, and CSSQ…QTTR. A compositionally biased stretch (polar residues) spans 54–74; the sequence is TMNSRSNNTSTLVHPGPSSQP. 3 stretches are compositionally biased toward basic and acidic residues: residues 216–226, 234–253, and 260–283; these read EKSASSHDRVN, QESRNRLYRDGGKTRLKDTD, and LATENHSQEGHGSPEDIDNDREYS. The interaction with ELF3 stretch occupies residues 261-484; sequence ATENHSQEGH…VMSPSEGLIY (224 aa). 2 stretches are compositionally biased toward polar residues: residues 551–567 and 579–588; these read PNEQMNQFGHPGNLQNT and APQQQQQPTK. 2 stretches are compositionally biased toward low complexity: residues 598-616 and 636-653; these read QGSTGSSPSGPQGISGSKS and TMTTTTTTTRTTVTQTTR.

Interacts specifically with both Pr and Pfr forms of phytochrome B. Interacts with ELF4. May form a homodimer.

It is found in the nucleus. In terms of biological role, may be a transcription factor part of a circadian clock input pathway. Acts within a 'zeitnehmer' feedback loop and is involved in its own circadian regulation. Has no role in regulating circadian clock function in the dark. Part of a corepressor complex consisting of ELF4, ELF3, and LUX involved in the transcriptional regulation of APRR9. The activity of the protein may be decreased in long day conditions due to its interaction with phytochrome B (phyB). Can regulate the initiation of flowering independently of phyB. Also involved in responses to nematode parasitism, like the formation of the nematode feeding structure. The sequence is that of Protein EARLY FLOWERING 3 (ELF3) from Arabidopsis thaliana (Mouse-ear cress).